The following is a 199-amino-acid chain: Peroxiredoxin-2 (199 aa).

The Thioredoxin domain occupies 7 to 165; that stretch reads AHVGKPAPEF…ALRLVQAFQY (159 aa). The Cysteine sulfenic acid (-SOH) intermediate role is filled by Cys-52. Position 113 is a phosphoserine (Ser-113). A Phosphothreonine modification is found at Thr-183. The residue at position 197 (Lys-197) is an N6-acetyllysine.

The protein belongs to the peroxiredoxin family. AhpC/Prx1 subfamily. As to quaternary structure, homodimer; disulfide-linked, upon oxidation. 5 homodimers assemble to form a ring-like decamer. Interacts with TIPIN. Post-translationally, the enzyme can be inactivated by further oxidation of the cysteine sulfenic acid (C(P)-SOH) to sulphinic acid (C(P)-SO2H) instead of its condensation to a disulfide bond. It can be reactivated by forming a transient disulfide bond with sulfiredoxin SRXN1, which reduces the cysteine sulfinic acid in an ATP- and Mg-dependent manner. In terms of processing, acetylation increases resistance to transition to high molecular-mass complexes. Deacetylated by HDAC6 which decreases reducing activity.

The protein resides in the cytoplasm. The catalysed reaction is a hydroperoxide + [thioredoxin]-dithiol = an alcohol + [thioredoxin]-disulfide + H2O. In terms of biological role, thiol-specific peroxidase that catalyzes the reduction of hydrogen peroxide and organic hydroperoxides to water and alcohols, respectively. Plays a role in cell protection against oxidative stress by detoxifying peroxides and as sensor of hydrogen peroxide-mediated signaling events. Might participate in the signaling cascades of growth factors and tumor necrosis factor-alpha by regulating the intracellular concentrations of H(2)O(2). The protein is Peroxiredoxin-2 (PRDX2) of Bos taurus (Bovine).